The primary structure comprises 299 residues: Secreted LysM effector ldpB (299 aa).

The first 19 residues, 1–19 (MGLTSILIAQVLFLGAANS), serve as a signal peptide directing secretion. LysM domains lie at 46-91 (WVND…SYCV), 135-182 (AFYK…YVCI), and 211-258 (KYHK…YVCV). An N-linked (GlcNAc...) asparagine glycan is attached at Asn154. Positions 266 to 283 (ATATPQPTPQPQQSSSPD) are enriched in low complexity. A disordered region spans residues 266 to 288 (ATATPQPTPQPQQSSSPDQPMPQ).

This sequence belongs to the secreted LysM effector family.

Its subcellular location is the secreted. It is found in the cell wall. It localises to the extracellular space. The protein resides in the extracellular matrix. Functionally, cell wall chitin of A.fumigatus recruits lung eosinophils during infection and ldpB might have a role in sequestration of chitin and act as triggers of host immunity to dampen host defense. This is Secreted LysM effector ldpB from Aspergillus fumigatus (strain ATCC MYA-4609 / CBS 101355 / FGSC A1100 / Af293) (Neosartorya fumigata).